The following is a 743-amino-acid chain: Amylovoran biosynthesis protein AmsF (743 aa).

A signal peptide spans 1–27 (MKRRELIRTAFSTIVATAALSSVSARA).

This sequence to R.meliloti ExoP.

The protein localises to the periplasm. Its pathway is glycan metabolism; exopolysaccharide biosynthesis. Its function is as follows. Involved in the biosynthesis of amylovoran which functions as a virulence factor. May be involved in the polymerization or late modification of the repeating units. The polypeptide is Amylovoran biosynthesis protein AmsF (amsF) (Erwinia amylovora (Fire blight bacteria)).